The following is a 224-amino-acid chain: Germin-like protein 8-9 (224 aa).

A signal peptide spans 1–22; the sequence is MASPSFCLFAALLALVSWQAIA. Cys32 and Cys47 are joined by a disulfide. The region spanning 62-212 is the Cupin type-1 domain; that stretch reads AMLDTPRKTN…AFQVGKGTID (151 aa). Asn76 carries N-linked (GlcNAc...) asparagine glycosylation. 3 residues coordinate Mn(2+): His109, His111, and Glu116. A glycan (N-linked (GlcNAc...) asparagine) is linked at Asn135. His157 contributes to the Mn(2+) binding site.

Belongs to the germin family. In terms of assembly, oligomer (believed to be a pentamer but probably hexamer).

It is found in the secreted. It localises to the extracellular space. The protein resides in the apoplast. In terms of biological role, plays a role in broad-spectrum disease resistance. Probably has no oxalate oxidase activity even if the active site is conserved. This Oryza sativa subsp. japonica (Rice) protein is Germin-like protein 8-9.